Here is a 145-residue protein sequence, read N- to C-terminus: MSNCRRLLCRQLSSAYLNYLPFYFLIYRPFSLYLSSCEYWQSCFSFFFLFFLFFFFFFTFQFLVAFPILLFKVSLNSTLTKHVRPIHQRTKARSLTHHCIPKRWNIHFFFSGLLHKTISRIFSWIGNTRQVAPTKHTPKYLLNTI.

Residues 46–66 (FFFLFFLFFFFFFTFQFLVAF) form a helical membrane-spanning segment.

It is found in the membrane. This is an uncharacterized protein from Saccharomyces cerevisiae (strain ATCC 204508 / S288c) (Baker's yeast).